A 144-amino-acid polypeptide reads, in one-letter code: UPF0306 protein Spro_0510 (144 aa).

Belongs to the UPF0306 family.

In Serratia proteamaculans (strain 568), this protein is UPF0306 protein Spro_0510.